The sequence spans 348 residues: Protein RecA (348 aa).

64–71 serves as a coordination point for ATP; that stretch reads GPESSGKT.

The protein belongs to the RecA family.

Its subcellular location is the cytoplasm. In terms of biological role, can catalyze the hydrolysis of ATP in the presence of single-stranded DNA, the ATP-dependent uptake of single-stranded DNA by duplex DNA, and the ATP-dependent hybridization of homologous single-stranded DNAs. It interacts with LexA causing its activation and leading to its autocatalytic cleavage. The protein is Protein RecA of Blastochloris viridis (Rhodopseudomonas viridis).